A 346-amino-acid chain; its full sequence is Golgi to ER traffic protein 4 (346 aa).

The tract at residues 317-346 is disordered; that stretch reads GQNQGGSRRTPQGRSQSKTVEAPPASMELD. Positions 321 to 335 are enriched in polar residues; that stretch reads GGSRRTPQGRSQSKT.

It belongs to the GET4 family. As to quaternary structure, component of the get4/get5/sgt2 sorting complex.

The protein localises to the cytoplasm. Functionally, component of the get4/get5/sgt2 sorting complex involved in the GET (guided entry of TA proteins) pathway that leads to the insertion of tail-anchored (TA) proteins into the endoplasmic reticulum. Get4 and get5 form an obligate complex that catalyzes the transfer of tail-anchored proteins destined to the endoplasmic reticulum from sgt2 to the cytosolic targeting factor which then targets the TA protein to the ER membrane via get1/get2. The sequence is that of Golgi to ER traffic protein 4 from Aspergillus fumigatus (strain ATCC MYA-4609 / CBS 101355 / FGSC A1100 / Af293) (Neosartorya fumigata).